Here is a 267-residue protein sequence, read N- to C-terminus: Putative N-acetylmuramoyl-L-alanine amidase RC0497 (267 aa).

Positions 1 to 25 (MSKSKAIENNGISNTNSPNGKYMAP) are disordered. Positions 10-19 (NGISNTNSPN) are enriched in polar residues. One can recognise an N-acetylmuramoyl-L-alanine amidase domain in the interval 33 to 141 (TCVVITYSVS…NLDLKHDLVG (109 aa)).

Belongs to the N-acetylmuramoyl-L-alanine amidase 2 family.

It localises to the secreted. The catalysed reaction is Hydrolyzes the link between N-acetylmuramoyl residues and L-amino acid residues in certain cell-wall glycopeptides.. The sequence is that of Putative N-acetylmuramoyl-L-alanine amidase RC0497 from Rickettsia conorii (strain ATCC VR-613 / Malish 7).